The following is a 406-amino-acid chain: Bifunctional enzyme IspD/IspF (406 aa).

The segment at Met-1 to Thr-247 is 2-C-methyl-D-erythritol 4-phosphate cytidylyltransferase. Positions Phe-248–Leu-406 are 2-C-methyl-D-erythritol 2,4-cyclodiphosphate synthase. Residues Asp-254 and His-256 each coordinate a divalent metal cation. Residues Asp-254–His-256 and His-280–Ser-281 contribute to the 4-CDP-2-C-methyl-D-erythritol 2-phosphate site. Position 288 (His-288) interacts with a divalent metal cation. Residues Asp-302–Gly-304, Phe-307–Asp-311, Thr-378–Glu-381, and Phe-385 contribute to the 4-CDP-2-C-methyl-D-erythritol 2-phosphate site.

It in the N-terminal section; belongs to the IspD/TarI cytidylyltransferase family. IspD subfamily. This sequence in the C-terminal section; belongs to the IspF family. It depends on a divalent metal cation as a cofactor.

The catalysed reaction is 2-C-methyl-D-erythritol 4-phosphate + CTP + H(+) = 4-CDP-2-C-methyl-D-erythritol + diphosphate. It carries out the reaction 4-CDP-2-C-methyl-D-erythritol 2-phosphate = 2-C-methyl-D-erythritol 2,4-cyclic diphosphate + CMP. It participates in isoprenoid biosynthesis; isopentenyl diphosphate biosynthesis via DXP pathway; isopentenyl diphosphate from 1-deoxy-D-xylulose 5-phosphate: step 2/6. It functions in the pathway isoprenoid biosynthesis; isopentenyl diphosphate biosynthesis via DXP pathway; isopentenyl diphosphate from 1-deoxy-D-xylulose 5-phosphate: step 4/6. Functionally, bifunctional enzyme that catalyzes the formation of 4-diphosphocytidyl-2-C-methyl-D-erythritol from CTP and 2-C-methyl-D-erythritol 4-phosphate (MEP) (IspD), and catalyzes the conversion of 4-diphosphocytidyl-2-C-methyl-D-erythritol 2-phosphate (CDP-ME2P) to 2-C-methyl-D-erythritol 2,4-cyclodiphosphate (ME-CPP) with a corresponding release of cytidine 5-monophosphate (CMP) (IspF). This Helicobacter acinonychis (strain Sheeba) protein is Bifunctional enzyme IspD/IspF.